Reading from the N-terminus, the 209-residue chain is Mitochondrial import inner membrane translocase subunit Tim23 (209 aa).

3 consecutive transmembrane segments (helical) span residues 73–93 (FELA…FGAL), 125–145 (ALWA…GVIV), and 180–200 (GGLA…WEHI).

This sequence belongs to the Tim17/Tim22/Tim23 family. As to quaternary structure, component of the TIM23 complex at least composed of timm23, timm17 and timm50. The complex interacts with the timm44 component of the PAM complex.

Its subcellular location is the mitochondrion inner membrane. Essential component of the TIM23 complex, a complex that mediates the translocation of transit peptide-containing proteins across the mitochondrial inner membrane. In Xenopus laevis (African clawed frog), this protein is Mitochondrial import inner membrane translocase subunit Tim23 (timm23).